The primary structure comprises 634 residues: Chaperone protein HtpG (634 aa).

The segment at 1–344 (MNETVANNKE…SNDLPLNVSR (344 aa)) is a; substrate-binding. The b stretch occupies residues 345–561 (EILQDNKVTQ…DFEMGTQMAK (217 aa)). Positions 562–634 (LLAAAGQAVP…TAINSLLTKG (73 aa)) are c.

It belongs to the heat shock protein 90 family. In terms of assembly, homodimer.

It is found in the cytoplasm. Functionally, molecular chaperone. Has ATPase activity. In Vibrio vulnificus (strain CMCP6), this protein is Chaperone protein HtpG.